The chain runs to 179 residues: Shikimate kinase (179 aa).

Position 15–20 (15–20 (GAGKTS)) interacts with ATP. Thr-19 contacts Mg(2+). Substrate-binding residues include Asp-37, Arg-61, and Gly-83. Arg-122 contributes to the ATP binding site. Residue Arg-142 participates in substrate binding.

It belongs to the shikimate kinase family. In terms of assembly, monomer. Mg(2+) serves as cofactor.

It is found in the cytoplasm. It catalyses the reaction shikimate + ATP = 3-phosphoshikimate + ADP + H(+). Its pathway is metabolic intermediate biosynthesis; chorismate biosynthesis; chorismate from D-erythrose 4-phosphate and phosphoenolpyruvate: step 5/7. In terms of biological role, catalyzes the specific phosphorylation of the 3-hydroxyl group of shikimic acid using ATP as a cosubstrate. The protein is Shikimate kinase of Coxiella burnetii (strain RSA 331 / Henzerling II).